The following is a 339-amino-acid chain: RNA 3'-terminal phosphate cyclase (339 aa).

ATP is bound by residues Gln103 and 283–287; that span reads HLADQ. The Tele-AMP-histidine intermediate role is filled by His308.

Belongs to the RNA 3'-terminal cyclase family. Type 1 subfamily.

The protein resides in the cytoplasm. It carries out the reaction a 3'-end 3'-phospho-ribonucleotide-RNA + ATP = a 3'-end 2',3'-cyclophospho-ribonucleotide-RNA + AMP + diphosphate. Catalyzes the conversion of 3'-phosphate to a 2',3'-cyclic phosphodiester at the end of RNA. The mechanism of action of the enzyme occurs in 3 steps: (A) adenylation of the enzyme by ATP; (B) transfer of adenylate to an RNA-N3'P to produce RNA-N3'PP5'A; (C) and attack of the adjacent 2'-hydroxyl on the 3'-phosphorus in the diester linkage to produce the cyclic end product. The biological role of this enzyme is unknown but it is likely to function in some aspects of cellular RNA processing. This chain is RNA 3'-terminal phosphate cyclase, found in Salmonella typhimurium (strain LT2 / SGSC1412 / ATCC 700720).